The primary structure comprises 112 residues: ATP synthase epsilon chain (112 aa).

It belongs to the ATPase epsilon chain family. As to quaternary structure, F-type ATPases have 2 components, CF(1) - the catalytic core - and CF(0) - the membrane proton channel. CF(1) has five subunits: alpha(3), beta(3), gamma(1), delta(1), epsilon(1). CF(0) has three main subunits: a, b and c.

Its subcellular location is the cell inner membrane. Its function is as follows. Produces ATP from ADP in the presence of a proton gradient across the membrane. This Rickettsia prowazekii (strain Madrid E) protein is ATP synthase epsilon chain (atpC).